Consider the following 323-residue polypeptide: Ubiquinone biosynthesis protein COQ4, mitochondrial (323 aa).

His209, Asp210, His213, and Glu225 together coordinate Zn(2+).

It belongs to the COQ4 family. As to quaternary structure, component of a multi-subunit COQ enzyme complex, composed of at least COQ3, COQ4, COQ5, COQ6, COQ7 and COQ9. Zn(2+) serves as cofactor.

It is found in the mitochondrion inner membrane. It catalyses the reaction a 4-hydroxy-3-methoxy-5-(all-trans-polyprenyl)benzoate + H(+) = a 2-methoxy-6-(all-trans-polyprenyl)phenol + CO2. It functions in the pathway cofactor biosynthesis; ubiquinone biosynthesis. In terms of biological role, lyase that catalyzes the C1-decarboxylation of 4-hydroxy-3-methoxy-5-(all-trans-polyprenyl)benzoic acid into 2-methoxy-6-(all-trans-polyprenyl)phenol during ubiquinone biosynthesis. This chain is Ubiquinone biosynthesis protein COQ4, mitochondrial, found in Debaryomyces hansenii (strain ATCC 36239 / CBS 767 / BCRC 21394 / JCM 1990 / NBRC 0083 / IGC 2968) (Yeast).